We begin with the raw amino-acid sequence, 112 residues long: Large ribosomal subunit protein P2A (112 aa).

A disordered region spans residues 83-112 (GAAPAAEAKKEEKVEEKEESDDDMGFSLFD). The segment covering 89–98 (EAKKEEKVEE) has biased composition (basic and acidic residues).

Belongs to the eukaryotic ribosomal protein P1/P2 family. P1 and P2 exist as dimers at the large ribosomal subunit. Post-translationally, phosphorylated.

Plays an important role in the elongation step of protein synthesis. This Zea mays (Maize) protein is Large ribosomal subunit protein P2A (RPP2A).